A 375-amino-acid polypeptide reads, in one-letter code: N-acetyldiaminopimelate deacetylase (375 aa).

Residue D69 is part of the active site. Residue E128 is the Proton acceptor of the active site.

This sequence belongs to the peptidase M20A family. N-acetyldiaminopimelate deacetylase subfamily.

It catalyses the reaction N-acetyl-(2S,6S)-2,6-diaminopimelate + H2O = (2S,6S)-2,6-diaminopimelate + acetate. It participates in amino-acid biosynthesis; L-lysine biosynthesis via DAP pathway; LL-2,6-diaminopimelate from (S)-tetrahydrodipicolinate (acetylase route): step 3/3. Its function is as follows. Catalyzes the conversion of N-acetyl-diaminopimelate to diaminopimelate and acetate. This chain is N-acetyldiaminopimelate deacetylase, found in Streptococcus suis (strain 05ZYH33).